Consider the following 160-residue polypeptide: Protein Vago (160 aa).

The signal sequence occupies residues 1–23 (MESISSMIYLVAMMSLIIGGSQA).

Expressed in fat body.

Its subcellular location is the secreted. Functionally, probably involved in the antiviral immune response. May have a role in controlling viral load in the adult fat body, after infection with viruses such as the Drosophila C virus. The protein is Protein Vago of Drosophila melanogaster (Fruit fly).